Consider the following 2871-residue polypeptide: Desmoplakin (2871 aa).

The segment at 1-584 is interaction with PKP1, JUP, PKP2; it reads MSCNGGSHPR…DYMKTIADLE (584 aa). The segment at 1-1056 is globular 1; that stretch reads MSCNGGSHPR…ANSENCNKNK (1056 aa). Phosphoserine is present on residues Ser22 and Ser53. A Phosphotyrosine modification is found at Tyr56. Thr61 bears the Phosphothreonine mark. Ser165, Ser166, and Ser176 each carry phosphoserine. 2 Spectrin repeats span residues 178-271 and 272-375; these read SGWD…HLRQ and LQNI…LKEN. The Spectrin 3a repeat unit spans residues 376 to 446; sequence AAYFQFFEEA…NLVNKSKKIV (71 aa). The 58-residue stretch at 458–515 folds into the SH3 domain; it reads NKPIILRALCDYKQDQKIVHKGDECILKDNNERSKWYVTGPGGVDMLVPSVGLIIPPP. The Spectrin 3b repeat unit spans residues 516 to 545; that stretch reads NPLAVDLSCKIEQYYEAILALWNQLYINMK. 3 Spectrin repeats span residues 546–627, 654–769, and 770–883; these read SLVS…IQLP, VIET…SLCT, and VRAL…DLEK. Residues 1018–1945 adopt a coiled-coil conformation; it reads SEMLKSLEDL…QREIDKLRQR (928 aa). Residues 1057 to 1945 are central fibrous rod domain; the sequence is FLDQNLQKYQ…QREIDKLRQR (889 aa). A phosphoserine mark is found at Ser1658, Ser1708, and Ser2024. The globular 2 stretch occupies residues 1946-2871; it reads PYGSHRETQT…YSFSSSSIGH (926 aa). The segment at 1960-2208 is 4.5 X 38 AA tandem repeats (Domain A); sequence TVDTSKLVFD…LLLSVQKRSM (249 aa). 17 Plectin repeats span residues 2009–2045, 2046–2083, 2084–2121, 2122–2159, 2163–2197, 2198–2233, 2251–2288, 2289–2326, 2327–2364, 2365–2402, 2406–2440, 2456–2493, 2507–2544, 2610–2647, 2648–2685, 2724–2761, and 2762–2799; these read QPFL…PEST, VMLL…FDDR, QQIY…RETG, MRLL…RDLY, NDPR…PHTG, LLLL…PSTV, KDFL…PGTA, LELL…IEFK, EKLL…KGHG, IRLL…EELS, SDPS…EETG, SQKN…YETF, TITG…RKFF, SDTL…SITG, QRLL…QDMA, QRFL…GRAA, and QRLQ…DITG. Ser2207, Ser2209, and Ser2225 each carry phosphoserine. The 4.5 X 38 AA tandem repeats (Domain B) stretch occupies residues 2244 to 2446; sequence DEVGERIKDF…EETGLCLLPL (203 aa). Residues 2609-2822 are 4.5 X 38 AA tandem repeats (Domain C); that stretch reads FSDTLEESSP…LPSPYNMSSA (214 aa). A phosphoserine mark is found at Ser2810 and Ser2815. Positions 2810-2823 are enriched in polar residues; sequence SKGLPSPYNMSSAP. A disordered region spans residues 2810–2871; that stretch reads SKGLPSPYNM…YSFSSSSIGH (62 aa). Phosphotyrosine is present on Tyr2817. Ser2820, Ser2821, and Ser2825 each carry phosphoserine. The segment at 2824-2847 is 6 X 4 AA tandem repeats of G-S-R-[SR]; sequence GSRSGSRSGSRSGSRSGSRSGSRR. Low complexity predominate over residues 2824–2847; it reads GSRSGSRSGSRSGSRSGSRSGSRR. Arg2826 and Arg2847 each carry omega-N-methylarginine. Position 2849 is a phosphoserine (Ser2849). Position 2853 is a phosphothreonine (Thr2853). The span at 2856-2871 shows a compositional bias: low complexity; it reads SSYSYSYSFSSSSIGH. The residue at position 2868 (Ser2868) is a Phosphoserine.

Belongs to the plakin or cytolinker family. Homodimer. Interacts with COL17A1 (via cytoplasmic region). Interacts with DSC2. Interacts with PKP2. Interacts with PKP1. Interacts weakly with TMEM65. Post-translationally, phosphorylation at Ser-2849 increases association with intermediate filament cytokeratin, potentially facilitating interaction between desmosome junctions and intermediate filament architecture. As to expression, expressed in oral mucosa (at protein level). Expressed in arrector pili muscle (at protein level). Expressed in the heart in the heart (at protein level). Apparently an obligate constituent of all desmosomes. In terms of tissue distribution, resides predominantly in tissues and cells of stratified origin.

It localises to the cell junction. It is found in the desmosome. The protein resides in the cell membrane. Its subcellular location is the cytoplasm. Major high molecular weight protein of desmosomes. Regulates profibrotic gene expression in cardiomyocytes via activation of the MAPK14/p38 MAPK signaling cascade and increase in TGFB1 protein abundance. This is Desmoplakin (DSP) from Homo sapiens (Human).